Here is a 532-residue protein sequence, read N- to C-terminus: E3 ubiquitin-protein ligase ICP0 (532 aa).

Zn(2+) is bound by residues Cys8, Cys11, Cys24, His26, Cys29, Cys32, Cys43, and Cys46. The segment at 8–47 (CPICLEDPSNYSMALPCLHAFCYVCITRWIRQNPTCPLCK) adopts an RING-type zinc-finger fold. 4 disordered regions span residues 206-391 (EYID…PMRP), 406-426 (APRDSSTSEAAGPSRLGAGPR), 461-498 (EDESARRRGNVLLRPRRQSVPPVPYPDIASTSPLIRQG), and 510-532 (QTQPAEPEEMRCPHNCQRYRRNQ). Acidic residues-rich tracts occupy residues 217 to 227 (SEEETDSDIEV) and 234 to 243 (DPEDTSDETS). Basic residues predominate over residues 286–295 (RSARLRRRQP).

Post-translationally, auto-ubiquitinated.

It catalyses the reaction S-ubiquitinyl-[E2 ubiquitin-conjugating enzyme]-L-cysteine + [acceptor protein]-L-lysine = [E2 ubiquitin-conjugating enzyme]-L-cysteine + N(6)-ubiquitinyl-[acceptor protein]-L-lysine.. Functionally, evades nuclear antiviral defenses triggered by dsDNA viruses. Acts during the initial stages of lytic infection and the reactivation of latent viral genome. Prevents the antiviral effect of nuclear bodies by degrading host PML and SP100. This Equus caballus (Horse) protein is E3 ubiquitin-protein ligase ICP0 (63).